The primary structure comprises 360 residues: Protein RecA (360 aa).

Position 69–76 (Gly69–Thr76) interacts with ATP.

The protein belongs to the RecA family.

Its subcellular location is the cytoplasm. Can catalyze the hydrolysis of ATP in the presence of single-stranded DNA, the ATP-dependent uptake of single-stranded DNA by duplex DNA, and the ATP-dependent hybridization of homologous single-stranded DNAs. It interacts with LexA causing its activation and leading to its autocatalytic cleavage. This Trichodesmium erythraeum (strain IMS101) protein is Protein RecA.